The primary structure comprises 213 residues: Transcriptional regulatory protein CrdR (213 aa).

Residues 4–119 (KIFLLEDDYL…ELEARIKRFF (116 aa)) form the Response regulatory domain. Position 53 is a 4-aspartylphosphate (aspartate 53). The segment at residues 121-212 (DDPIEIMPNI…HKGVGYRFNP (92 aa)) is a DNA-binding region (ompR/PhoB-type).

Phosphorylated by CrdS.

Member of the two-component regulatory system CrdR/CrdS that induces the transcriptional induction of the copper resistance determinant CrdA. Upon phosphorylation by CrdS, functions as a transcriptional regulator by direct binding to promoter regions of target genes including the crdA promoter or nitric oxide-responsive gene promoters. The protein is Transcriptional regulatory protein CrdR of Helicobacter pylori (strain ATCC 700392 / 26695) (Campylobacter pylori).